We begin with the raw amino-acid sequence, 367 residues long: MDAQSSAKVNSRKRRKEAPGPNGATEEDGIPSKVQRCAVGLRQPAPFSDEIEVDFSKPYVRVTMEEACRGTPCERPVRVYADGIFDLFHSGHARALMQAKNLFPNTYLIVGVCSDELTHNFKGFTVMNENERYDAVQHCRYVDEVVRNAPWTLTPEFLAEHRIDFVAHDDIPYSSAGSDDVYKHIKDAGMFAPTQRTEGISTSDIITRIVRDYDVYARRNLQRGYTAKELNVSFINEKKYHLQERVDKVKKKVKDVEEKSKEFVQKVEEKSIDLIQKWEEKSREFIGSFLEMFGPEGALKHMLKEGKGRMLQAISPKQSPSSSPTHERSPSPSFRWPFSGKTSPSSSPASLSRCRAVTCDISEDEED.

At M1 the chain carries N-acetylmethionine. The tract at residues 1–32 (MDAQSSAKVNSRKRRKEAPGPNGATEEDGIPS) is disordered. An N6-acetyllysine modification is found at K8. Residues I84, F85, H92, and K122 each coordinate CTP. Phosphocholine contacts are provided by K122 and W151. The CTP site is built by H168, D169, Y173, Q195, R196, T197, and I200. Amphipathic stretches follow at residues 228 to 287 (KELN…EFIG) and 298 to 315 (ALKH…QAIS). Position 233 is a phosphoserine (S233). The segment at 272–293 (IDLIQKWEEKSREFIGSFLEMF) is autoinhibitory (AI). The interval 313–367 (AISPKQSPSSSPTHERSPSPSFRWPFSGKTSPSSSPASLSRCRAVTCDISEDEED) is disordered. Phosphoserine occurs at positions 315, 319, 321, 322, and 323. Positions 315-324 (SPKQSPSSSP) are enriched in polar residues. Residues 319 to 324 (SPSSSP) form repeat 1. The tract at residues 319-348 (SPSSSPTHERSPSPSFRWPFSGKTSPSSSP) is 3 X repeats. The residue at position 325 (T325) is a Phosphothreonine. A phosphoserine mark is found at S329, S331, and S333. The 2; approximate repeat unit spans residues 329 to 333 (SPSPS). The segment covering 330–352 (PSPSFRWPFSGKTSPSSSPASLS) has biased composition (low complexity). T342 is modified (phosphothreonine). Residues S343, S345, S346, S347, S350, and S352 each carry the phosphoserine modification. Copy 3 of the repeat occupies 343-348 (SPSSSP). A Phosphothreonine modification is found at T358. Residue S362 is modified to Phosphoserine.

Belongs to the cytidylyltransferase family. As to quaternary structure, homodimer. In terms of processing, the serine residues of the C-terminus are phosphorylated. The inactive soluble form is stabilized by phosphorylation, the active membrane bound form is promoted by anionic lipids or diacylglycerol, and is stabilized by dephosphorylation. Monoubiquitinated by the SCF(FBXL2) complex, leading to proteasomal degradation. In terms of tissue distribution, brain and liver (at protein level). Also found in heart, kidney, spleen, lung, skeletal muscle, ovary and testis.

It localises to the cytoplasm. Its subcellular location is the cytosol. The protein localises to the membrane. It is found in the endoplasmic reticulum membrane. The protein resides in the nucleus. The catalysed reaction is phosphocholine + CTP + H(+) = CDP-choline + diphosphate. It participates in phospholipid metabolism; phosphatidylcholine biosynthesis; phosphatidylcholine from phosphocholine: step 1/2. Its activity is regulated as follows. Interconverts between an inactive cytosolic form and an active membrane-bound form. Activation involves disruption of an inhibitory interaction between helices at the base of the active site and the autoinhibitory (AI) region. In terms of biological role, catalyzes the key rate-limiting step in the CDP-choline pathway for phosphatidylcholine biosynthesis. In Mus musculus (Mouse), this protein is Choline-phosphate cytidylyltransferase A (Pcyt1a).